A 399-amino-acid chain; its full sequence is V-set and immunoglobulin domain-containing protein 4 (399 aa).

Residues 1-19 (MGILLGLLLLGHLTVDTYG) form the signal peptide. Residues 20–283 (RPILEVPESV…TSAGPGKSLP (264 aa)) lie on the Extracellular side of the membrane. Ig-like domains lie at 21–131 (PILE…DKIT) and 143–226 (PTVT…SDIV). 2 cysteine pairs are disulfide-bonded: Cys-41/Cys-113 and Cys-165/Cys-211. A helical transmembrane segment spans residues 284–304 (VFAIILIISLCCMVVFTMAYI). The Cytoplasmic segment spans residues 305-399 (MLCRKTSQQE…FLATEGKSVC (95 aa)).

In terms of tissue distribution, abundantly expressed in several fetal tissues. In adult tissues, highest expression in lung and placenta. Expressed in resting macrophages.

The protein resides in the membrane. Its function is as follows. Phagocytic receptor, strong negative regulator of T-cell proliferation and IL2 production. Potent inhibitor of the alternative complement pathway convertases. This is V-set and immunoglobulin domain-containing protein 4 (VSIG4) from Homo sapiens (Human).